The chain runs to 56 residues: Large ribosomal subunit protein bL33C (56 aa).

This sequence belongs to the bacterial ribosomal protein bL33 family.

The chain is Large ribosomal subunit protein bL33C from Sorangium cellulosum (strain So ce56) (Polyangium cellulosum (strain So ce56)).